A 148-amino-acid polypeptide reads, in one-letter code: MDTPNKDDSIIRFSVSLQQNLLDELDNRIIKNGYSSRSELVRDMIREKLVEDNWVEDNPNDGSKIAVLVVIYDHHQRELNQRMIDIQHASGTHVLCTTHIHMDEHNCLETIILQGNSLEIQRLQLEIGGLRGVKFAKLTKASSFEYNE.

4 residues coordinate Ni(2+): His88, His99, His101, and Cys107.

The protein belongs to the transcriptional regulatory CopG/NikR family. As to quaternary structure, homotetramer. Ni(2+) is required as a cofactor.

Transcriptional regulator. The chain is Putative nickel-responsive regulator from Helicobacter pylori (strain J99 / ATCC 700824) (Campylobacter pylori J99).